We begin with the raw amino-acid sequence, 508 residues long: Photosystem II CP47 reaction center protein (508 aa).

6 consecutive transmembrane segments (helical) span residues Ser-21–Ser-36, Ile-101–Trp-115, Gly-140–Phe-156, Ile-203–Ser-218, Val-237–Val-252, and Ser-457–Arg-472.

Belongs to the PsbB/PsbC family. PsbB subfamily. PSII is composed of 1 copy each of membrane proteins PsbA, PsbB, PsbC, PsbD, PsbE, PsbF, PsbH, PsbI, PsbJ, PsbK, PsbL, PsbM, PsbT, PsbX, PsbY, PsbZ, Psb30/Ycf12, at least 3 peripheral proteins of the oxygen-evolving complex and a large number of cofactors. It forms dimeric complexes. Binds multiple chlorophylls. PSII binds additional chlorophylls, carotenoids and specific lipids. is required as a cofactor.

Its subcellular location is the plastid. The protein localises to the chloroplast thylakoid membrane. Functionally, one of the components of the core complex of photosystem II (PSII). It binds chlorophyll and helps catalyze the primary light-induced photochemical processes of PSII. PSII is a light-driven water:plastoquinone oxidoreductase, using light energy to abstract electrons from H(2)O, generating O(2) and a proton gradient subsequently used for ATP formation. The polypeptide is Photosystem II CP47 reaction center protein (Guizotia abyssinica (Niger)).